The following is a 294-amino-acid chain: MSSLRQIAFYGKGGIGKSTTSQNTLAALAEMGQKILIVGCDPKADSTRLILHAKAQDTILSLAASAGSVEDLELEDVMKVGYKDIRCVESGGPEPGVGCAGRGVITSINFLEENGAYENIDYVSYDVLGDVVCGGFAMPIRENKAQEIYIVMSGEMMAMYAANNISKGILKYANSGGVRLGGLICNERQTDKELELAEALAKKLGTQLIYFVPRDNVVQHAELRRMTVLEYAPESQQADHYRNLATKVHNNGGKGIIPTPISMDELEDMLMEHGIMKPVDESIVGKTAAELAAS.

11 to 18 (GKGGIGKS) is an ATP binding site. Residue cysteine 99 coordinates [4Fe-4S] cluster. ADP-ribosylarginine; by dinitrogenase reductase ADP-ribosyltransferase is present on arginine 102. Cysteine 133 is a binding site for [4Fe-4S] cluster.

This sequence belongs to the NifH/BchL/ChlL family. As to quaternary structure, homodimer. Requires [4Fe-4S] cluster as cofactor. Post-translationally, the reversible ADP-ribosylation of Arg-102 inactivates the nitrogenase reductase and regulates nitrogenase activity.

The catalysed reaction is N2 + 8 reduced [2Fe-2S]-[ferredoxin] + 16 ATP + 16 H2O = H2 + 8 oxidized [2Fe-2S]-[ferredoxin] + 2 NH4(+) + 16 ADP + 16 phosphate + 6 H(+). Its function is as follows. The key enzymatic reactions in nitrogen fixation are catalyzed by the nitrogenase complex, which has 2 components: the iron protein and the molybdenum-iron protein. The chain is Nitrogenase iron protein (nifH) from Bradyrhizobium sp. (strain ANU 289).